Here is a 65-residue protein sequence, read N- to C-terminus: MPKMKTHRGAAKRFSKTGTGKIKMAHAFTSHILTSKTRKNKRNLRKGGIVAASDHKNISCLIPYK.

Belongs to the bacterial ribosomal protein bL35 family.

This is Large ribosomal subunit protein bL35 from Geobacter sp. (strain M21).